A 103-amino-acid chain; its full sequence is Small ribosomal subunit protein uS10 (103 aa).

This sequence belongs to the universal ribosomal protein uS10 family. In terms of assembly, part of the 30S ribosomal subunit.

Its function is as follows. Involved in the binding of tRNA to the ribosomes. This chain is Small ribosomal subunit protein uS10, found in Saccharophagus degradans (strain 2-40 / ATCC 43961 / DSM 17024).